Consider the following 187-residue polypeptide: Peptidyl-tRNA hydrolase (187 aa).

Tyrosine 15 contributes to the tRNA binding site. Histidine 20 (proton acceptor) is an active-site residue. Phenylalanine 65, asparagine 67, and asparagine 113 together coordinate tRNA.

It belongs to the PTH family. As to quaternary structure, monomer.

It localises to the cytoplasm. It carries out the reaction an N-acyl-L-alpha-aminoacyl-tRNA + H2O = an N-acyl-L-amino acid + a tRNA + H(+). In terms of biological role, hydrolyzes ribosome-free peptidyl-tRNAs (with 1 or more amino acids incorporated), which drop off the ribosome during protein synthesis, or as a result of ribosome stalling. Functionally, catalyzes the release of premature peptidyl moieties from peptidyl-tRNA molecules trapped in stalled 50S ribosomal subunits, and thus maintains levels of free tRNAs and 50S ribosomes. This Methylococcus capsulatus (strain ATCC 33009 / NCIMB 11132 / Bath) protein is Peptidyl-tRNA hydrolase.